A 784-amino-acid polypeptide reads, in one-letter code: Transcription factor Sp1 (784 aa).

A disordered region spans residues 1–95 (MSDQDHSMDE…PSQSGGTGEL (95 aa)). At Ser-2 the chain carries N-acetylserine. Phosphoserine occurs at positions 2 and 7. The tract at residues 2 to 84 (SDQDHSMDEV…SPNENSNNSQ (83 aa)) is repressor domain. Lys-16 participates in a covalent cross-link: Glycyl lysine isopeptide (Lys-Gly) (interchain with G-Cter in SUMO); alternate. A Glycyl lysine isopeptide (Lys-Gly) (interchain with G-Cter in SUMO2); alternate cross-link involves residue Lys-16. Residues 23 to 34 (GNNGGSGNGGGA) are compositionally biased toward gly residues. The segment covering 37–49 (SQTRSSSTGSSSS) has biased composition (low complexity). Ser-61 is modified (phosphoserine). Positions 74–87 (ESPNENSNNSQGPS) are enriched in low complexity. Position 103 is a phosphoserine; by ATM (Ser-103). A compositionally biased stretch (polar residues) spans 111–125 (IISSSSGATPTSKEQ). Residues 111–144 (IISSSSGATPTSKEQSGNSTNGSNGSESSKNRTV) are disordered. A compositionally biased stretch (low complexity) spans 126-138 (SGNSTNGSNGSES). The segment at 148–253 (QYVVAATPNL…ANNVLSGQTQ (106 aa)) is transactivation domain A (Gln-rich). Positions 263–497 (NGNITLLPVN…PMQGVSLGQT (235 aa)) are transactivation domain B (Gln-rich). A Phosphothreonine; by MAPK8 modification is found at Thr-280. Disordered stretches follow at residues 282–303 (SSQAGTISSSGSQESSSQPVTS) and 333–398 (TTTS…QTQQ). 2 stretches are compositionally biased toward low complexity: residues 344–357 (TSSGSSGTSSQGQT) and 373–398 (QQNQTSGGSLQGSQQKEGEQSQQTQQ). Position 455 is a phosphothreonine; by MAPK1 and MAPK3 (Thr-455). Residues 464 to 472 (VSWQTLQLQ) carry the 9aaTAD motif. Ser-493 carries an O-linked (GlcNAc) serine glycan. The transactivation domain C (highly charged) stretch occupies residues 498–611 (SSSNTTLTPI…REACTCPYCK (114 aa)). Positions 566-598 (QLGLHGSGGDGIHDETAGGEGENSSDLQPQAGR) are disordered. Ser-613 carries the post-translational modification Phosphoserine; alternate. The O-linked (GlcNAc) serine; alternate glycan is linked to Ser-613. Residues 620–784 (DPGKKKQHIC…QSINISGNGF (165 aa)) are VZV IE62-binding. C2H2-type zinc fingers lie at residues 627-656 (HICHIQGCGKVYGKTSHLRAHLRWHTGERP), 657-686 (FMCNWSYCGKRFTRSDELQRHKRTHTGEKK), and 687-714 (FACPECPKRFMRSDHLSKHIKTHQNKKG). Thr-641 carries the phosphothreonine; alternate modification. Thr-641 is a glycosylation site (O-linked (GlcNAc) threonine; alternate). Residue Ser-642 is glycosylated (O-linked (GlcNAc) serine; alternate). At Ser-642 the chain carries Phosphoserine; by PKC/PRKCZ; alternate. Thr-652 is subject to Phosphothreonine; by PKC/PRKCZ. The residue at position 669 (Thr-669) is a Phosphothreonine. At Ser-671 the chain carries Phosphoserine; by PKC/PRKCZ. The residue at position 682 (Thr-682) is a Phosphothreonine; by PKC/PRKCZ. A phosphoserine; alternate mark is found at Ser-699 and Ser-703. Residues Ser-699 and Ser-703 are each glycosylated (O-linked (GlcNAc) serine; alternate). Lys-704 carries the N6-acetyllysine modification. The interval 709 to 784 (HQNKKGGPGV…QSINISGNGF (76 aa)) is domain D. Thr-738 is modified (phosphothreonine; by MAPK1, MAPK3 and MAPK8).

The protein belongs to the Sp1 C2H2-type zinc-finger protein family. Interacts with ATF7IP, ATF7IP2, BAHD1, POGZ, HCFC1, AATF and PHC2. Interacts with SV40 VP2/3 proteins. Interacts with SV40 major capsid protein VP1; this interaction leads to a cooperativity between the 2 proteins in DNA binding. Interacts with HLTF; the interaction may be required for basal transcriptional activity of HLTF. Interacts (deacetylated form) with EP300; the interaction enhances gene expression. Interacts with HDAC1 and JUN. Interacts with ELF1; the interaction is inhibited by glycosylation of SP1. Interaction with NFYA; the interaction is inhibited by glycosylation of SP1. Interacts with SMARCA4/BRG1. Interacts with ATF7IP and TBP. Interacts with MEIS2 isoform 4 and PBX1 isoform PBX1a. Interacts with EGR1. Interacts with RNF112 in an oxidative stress-regulated manner. Interacts with ZBTB7A; ZBTB7A prevents the binding to GC-rich motifs in promoters and represses the transcriptional activity of SP1. Interacts with DDX3X; this interaction potentiates SP1-induced CDKN1A/WAF1/CIP1 transcription. Interacts with MSX1; the interaction may inhibit MSX1 autoinactivation. Interacts with MSX3. As to quaternary structure, (Microbial infection) Interacts with murine minute virus NS1; this interaction allows high levels of viral P38 promoter transactivation by NS1. In terms of processing, phosphorylated on multiple serine and threonine residues. Phosphorylation is coupled to ubiquitination, sumoylation and proteolytic processing. Phosphorylation on Ser-61 enhances proteolytic cleavage. Phosphorylation on Ser-7 enhances ubiquitination and protein degradation. Hyperphosphorylation on Ser-103 in response to DNA damage has no effect on transcriptional activity. MAPK1/MAPK3-mediated phosphorylation on Thr-455 and Thr-738 enhances VEGF transcription but, represses FGF2-triggered PDGFR-alpha transcription. Also implicated in the repression of RECK by ERBB2. Hyperphosphorylated on Thr-280 and Thr-738 during mitosis by MAPK8 shielding SP1 from degradation by the ubiquitin-dependent pathway. Phosphorylated in the zinc-finger domain by calmodulin-activated PKCzeta. Phosphorylation on Ser-642 by PKCzeta is critical for TSA-activated LHR gene expression through release of its repressor, p107. Phosphorylation on Thr-669, Ser-671 and Thr-682 is stimulated by angiotensin II via the AT1 receptor inducing increased binding to the PDGF-D promoter. This phosphorylation is increased in injured artey wall. Ser-61 and Thr-682 can both be dephosphorylated by PP2A during cell-cycle interphase. Dephosphorylation on Ser-61 leads to increased chromatin association during interphase and increases the transcriptional activity. On insulin stimulation, sequentially glycosylated and phosphorylated on several C-terminal serine and threonine residues. Acetylated. Acetylation/deacetylation events affect transcriptional activity. Deacetylation leads to an increase in the expression of the 12(s)-lipooxygenase gene through recruitment of p300 to the promoter. Deacetylated by HDAC6 which leads to increased expression of ENG and positive regulation of angiogenesis. Post-translationally, ubiquitinated. Ubiquitination occurs on the C-terminal proteolytically-cleaved peptide and is triggered by phosphorylation. In terms of processing, sumoylated with SUMO1. Sumoylation modulates proteolytic cleavage of the N-terminal repressor domain. Sumoylation levels are attenuated during tumorigenesis. Phosphorylation mediates SP1 desumoylation. Proteolytic cleavage in the N-terminal repressor domain is prevented by sumoylation. The C-terminal cleaved product is susceptible to degradation. Post-translationally, O-glycosylated; Contains 8 N-acetylglucosamine side chains. Levels are controlled by insulin and the SP1 phosphorylation states. Insulin-mediated O-glycosylation locates SP1 to the nucleus, where it is sequentially deglycosylated and phosphorylated. O-glycosylation affects transcriptional activity through disrupting the interaction with a number of transcription factors including ELF1 and NFYA. Inhibited by peroxisomome proliferator receptor gamma (PPARgamma).

The protein resides in the nucleus. Its subcellular location is the cytoplasm. Functionally, transcription factor that can activate or repress transcription in response to physiological and pathological stimuli. Binds with high affinity to GC-rich motifs and regulates the expression of a large number of genes involved in a variety of processes such as cell growth, apoptosis, differentiation and immune responses. Highly regulated by post-translational modifications (phosphorylations, sumoylation, proteolytic cleavage, glycosylation and acetylation). Also binds the PDGFR-alpha G-box promoter. May have a role in modulating the cellular response to DNA damage. Implicated in chromatin remodeling. Plays a role in the recruitment of SMARCA4/BRG1 on the c-FOS promoter Plays an essential role in the regulation of FE65 gene expression. Positively regulates the transcription of the core clock component BMAL1. Plays a role in protecting cells against oxidative stress following brain injury by regulating the expression of RNF112. The sequence is that of Transcription factor Sp1 (Sp1) from Mus musculus (Mouse).